The following is a 476-amino-acid chain: Sulfate adenylyltransferase subunit 1 (476 aa).

One can recognise a tr-type G domain in the interval Lys24–Glu239. The segment at Gly33–Ser40 is G1. Gly33–Ser40 is a binding site for GTP. The tract at residues Gly91–Asp95 is G2. A G3 region spans residues Asp112–Gly115. Residues Asp112 to His116 and Asn167 to Asp170 contribute to the GTP site. The segment at Asn167–Asp170 is G4. A G5 region spans residues Ser205–Leu207.

This sequence belongs to the TRAFAC class translation factor GTPase superfamily. Classic translation factor GTPase family. CysN/NodQ subfamily. As to quaternary structure, heterodimer composed of CysD, the smaller subunit, and CysN.

The catalysed reaction is sulfate + ATP + H(+) = adenosine 5'-phosphosulfate + diphosphate. The protein operates within sulfur metabolism; hydrogen sulfide biosynthesis; sulfite from sulfate: step 1/3. Functionally, with CysD forms the ATP sulfurylase (ATPS) that catalyzes the adenylation of sulfate producing adenosine 5'-phosphosulfate (APS) and diphosphate, the first enzymatic step in sulfur assimilation pathway. APS synthesis involves the formation of a high-energy phosphoric-sulfuric acid anhydride bond driven by GTP hydrolysis by CysN coupled to ATP hydrolysis by CysD. The sequence is that of Sulfate adenylyltransferase subunit 1 from Vibrio campbellii (strain ATCC BAA-1116).